Reading from the N-terminus, the 261-residue chain is High-affinity zinc uptake system membrane protein ZnuB (261 aa).

The next 7 membrane-spanning stretches (helical) occupy residues 8–28 (ALLT…FVVW), 54–74 (VNPY…MVWL), 84–104 (TLLG…VGLL), 125–145 (TDLI…IYFW), 171–191 (ILMI…GALI), 214–234 (VGWA…LSAF), and 236–256 (DTAA…LSLF).

This sequence belongs to the ABC-3 integral membrane protein family.

The protein resides in the cell inner membrane. Its function is as follows. Involved in the high-affinity zinc uptake transport system. This is High-affinity zinc uptake system membrane protein ZnuB (znuB) from Haemophilus influenzae (strain ATCC 51907 / DSM 11121 / KW20 / Rd).